A 426-amino-acid polypeptide reads, in one-letter code: 3-phosphoshikimate 1-carboxyvinyltransferase (426 aa).

3-phosphoshikimate-binding residues include Lys-22, Ser-23, and Arg-27. Phosphoenolpyruvate is bound at residue Lys-22. Positions 96 and 124 each coordinate phosphoenolpyruvate. Residues Ser-170, Ser-171, Gln-172, Ser-198, Asp-314, Asn-337, and Lys-341 each contribute to the 3-phosphoshikimate site. Gln-172 contacts phosphoenolpyruvate. Asp-314 (proton acceptor) is an active-site residue. Phosphoenolpyruvate contacts are provided by Arg-345, Arg-387, and Lys-412.

The protein belongs to the EPSP synthase family. Monomer.

It localises to the cytoplasm. The catalysed reaction is 3-phosphoshikimate + phosphoenolpyruvate = 5-O-(1-carboxyvinyl)-3-phosphoshikimate + phosphate. It participates in metabolic intermediate biosynthesis; chorismate biosynthesis; chorismate from D-erythrose 4-phosphate and phosphoenolpyruvate: step 6/7. Functionally, catalyzes the transfer of the enolpyruvyl moiety of phosphoenolpyruvate (PEP) to the 5-hydroxyl of shikimate-3-phosphate (S3P) to produce enolpyruvyl shikimate-3-phosphate and inorganic phosphate. This is 3-phosphoshikimate 1-carboxyvinyltransferase from Vibrio campbellii (strain ATCC BAA-1116).